Consider the following 339-residue polypeptide: MNIREAIAAVVARRDLTQAEAASVMEEIMSGTATPAQIGAFLTALHMKGETDAEIAGMAAVMREKATHVYFDGPVIDTCGTGGDGAHTFNISTTAAFVAAGAGLTVAKHGNRAMSSVCGSADVLEGLGVQIELDAEGVARCLREAGIGFMFAPKFHPAMRFAGPVRREIGIRTVFNILGPLTNPARARYQVLGVASAALAEKLAYALSRLDTVHALVVHGDGGVDELTLSGPNLIFDVRAGQAPRQMLVAPEDVGLPRAPQDALRGGDVAYNVAIVRAILSGEEHGPRRDVVLFNAAAAMVAGDLAPDLATGVAMARHSIDSGRALERLNQMIAVSRGE.

5-phospho-alpha-D-ribose 1-diphosphate-binding positions include Gly-80, 83–84 (GD), Thr-88, 90–93 (NIST), 108–116 (KHGNRAMSS), and Ser-120. Gly-80 is an anthranilate binding site. Ser-92 is a binding site for Mg(2+). Residue Asn-111 participates in anthranilate binding. An anthranilate-binding site is contributed by Arg-166. Mg(2+) contacts are provided by Asp-225 and Glu-226.

Belongs to the anthranilate phosphoribosyltransferase family. In terms of assembly, homodimer. The cofactor is Mg(2+).

The enzyme catalyses N-(5-phospho-beta-D-ribosyl)anthranilate + diphosphate = 5-phospho-alpha-D-ribose 1-diphosphate + anthranilate. It participates in amino-acid biosynthesis; L-tryptophan biosynthesis; L-tryptophan from chorismate: step 2/5. Functionally, catalyzes the transfer of the phosphoribosyl group of 5-phosphorylribose-1-pyrophosphate (PRPP) to anthranilate to yield N-(5'-phosphoribosyl)-anthranilate (PRA). This is Anthranilate phosphoribosyltransferase from Chloroflexus aurantiacus (strain ATCC 29366 / DSM 635 / J-10-fl).